A 149-amino-acid chain; its full sequence is MDNEQLQKLTEDISLQDFGKPFRHRAFFNDRLKTTGGRYMLSSHNIELNRKYLIEHGRSELVGIIKHELCHYHLHLEGKGYKHRDKDFRDLLQKVGAPRFCTPLQTKKTQKKTYMYRCAACGQQYIKKRAMNPERYACGKCRGKIKRIF.

Positions 6-147 (LQKLTEDISL…CGKCRGKIKR (142 aa)) constitute a SprT-like domain. Histidine 67 lines the Zn(2+) pocket. Glutamate 68 is a catalytic residue. Histidine 71 serves as a coordination point for Zn(2+).

Belongs to the SprT family. Requires Zn(2+) as cofactor.

Its subcellular location is the cytoplasm. This chain is Protein SprT-like, found in Bacillus velezensis (strain DSM 23117 / BGSC 10A6 / LMG 26770 / FZB42) (Bacillus amyloliquefaciens subsp. plantarum).